The following is a 183-amino-acid chain: MTDSEYSSAADAVANLVRRVPGFPSEGVVFEDLTPVLADAGAFRLIVDELAEAARSYHADIIGGLDARGFLLGSAVAYQLGLGILAVRKEGKLPPPVFHRGYDLEYGHAALEIPREGLNIQGKNIVLIDDVLATGGTLCASRALLEEAGANVAGLAVILEVEALEGRKRLADLPLTVVGERSE.

Belongs to the purine/pyrimidine phosphoribosyltransferase family. Homodimer.

The protein localises to the cytoplasm. The enzyme catalyses AMP + diphosphate = 5-phospho-alpha-D-ribose 1-diphosphate + adenine. It functions in the pathway purine metabolism; AMP biosynthesis via salvage pathway; AMP from adenine: step 1/1. Catalyzes a salvage reaction resulting in the formation of AMP, that is energically less costly than de novo synthesis. This is Adenine phosphoribosyltransferase from Corynebacterium kroppenstedtii (strain DSM 44385 / JCM 11950 / CIP 105744 / CCUG 35717).